Reading from the N-terminus, the 551-residue chain is Arginine--tRNA ligase (551 aa).

The 'HIGH' region signature appears at 123 to 133 (ANPTGPLTIGR).

This sequence belongs to the class-I aminoacyl-tRNA synthetase family. In terms of assembly, monomer.

It localises to the cytoplasm. The catalysed reaction is tRNA(Arg) + L-arginine + ATP = L-arginyl-tRNA(Arg) + AMP + diphosphate. This Prosthecochloris aestuarii (strain DSM 271 / SK 413) protein is Arginine--tRNA ligase.